The following is a 73-amino-acid chain: UPF0499 protein NFIA_054990 (73 aa).

Positions 1–20 are cleaved as a signal peptide; sequence MKSFNLLSLSLLLAIASAAA. 3 disulfides stabilise this stretch: cysteine 46–cysteine 60, cysteine 50–cysteine 63, and cysteine 56–cysteine 70.

This sequence belongs to the UPF0499 family.

Its subcellular location is the secreted. In Neosartorya fischeri (strain ATCC 1020 / DSM 3700 / CBS 544.65 / FGSC A1164 / JCM 1740 / NRRL 181 / WB 181) (Aspergillus fischerianus), this protein is UPF0499 protein NFIA_054990.